Consider the following 356-residue polypeptide: Heme A synthase (356 aa).

The next 5 membrane-spanning stretches (helical) occupy residues 23-43 (IAIWLFVCCALVFAMVVVGGV), 105-125 (FHRLLGRVIGLAFFIPFLYFL), 141-161 (IFLLGALQGGMGWYMVKSGLV), 173-193 (AHLGLAFAIYAAMFWVALDLL), and 212-232 (STMLSALVFIMVLSGGFVAGI). A heme-binding site is contributed by His274. Transmembrane regions (helical) follow at residues 276 to 296 (LIAWTLAILVPIFWLKSRAVP), 307 to 327 (LLLIMLAVQITLGISTLLLVV), and 329 to 349 (LTLAAAHQAGALLLFTAALWV). Heme is bound at residue His335.

The protein belongs to the COX15/CtaA family. Type 2 subfamily. In terms of assembly, interacts with CtaB. Heme b serves as cofactor.

It localises to the cell membrane. The enzyme catalyses Fe(II)-heme o + 2 A + H2O = Fe(II)-heme a + 2 AH2. It participates in porphyrin-containing compound metabolism; heme A biosynthesis; heme A from heme O: step 1/1. In terms of biological role, catalyzes the conversion of heme O to heme A by two successive hydroxylations of the methyl group at C8. The first hydroxylation forms heme I, the second hydroxylation results in an unstable dihydroxymethyl group, which spontaneously dehydrates, resulting in the formyl group of heme A. The protein is Heme A synthase of Nitrosospira multiformis (strain ATCC 25196 / NCIMB 11849 / C 71).